A 440-amino-acid polypeptide reads, in one-letter code: Protein disulfide-isomerase 2-3 (440 aa).

A signal peptide spans 1–24; that stretch reads MYKSPLTLLTLLTICFGFFDLSSA. 2 consecutive Thioredoxin domains span residues 25–136 and 154–269; these read LYGS…KQIK and SKEK…ELVE. Catalysis depends on nucleophile residues Cys-60 and Cys-63. Cys-60 and Cys-63 are oxidised to a cystine. The interval 143-163 is disordered; the sequence is LEGKSKPTGGGSKEKKSEPSA. N-linked (GlcNAc...) asparagine glycosylation is present at Asn-168. Catalysis depends on nucleophile residues Cys-192 and Cys-195. A disulfide bridge connects residues Cys-192 and Cys-195. Residues 437 to 440 carry the Prevents secretion from ER motif; sequence KDEL.

Belongs to the protein disulfide isomerase family. Widely expressed.

The protein resides in the endoplasmic reticulum lumen. It carries out the reaction Catalyzes the rearrangement of -S-S- bonds in proteins.. Acts as a protein-folding catalyst that interacts with nascent polypeptides to catalyze the formation, isomerization, and reduction or oxidation of disulfide bonds. The protein is Protein disulfide-isomerase 2-3 (PDIL2-3) of Arabidopsis thaliana (Mouse-ear cress).